The chain runs to 390 residues: Terminal nucleotidyltransferase 5C (390 aa).

This sequence belongs to the TENT family.

It is found in the nucleus. Its subcellular location is the cytoplasm. It localises to the cytoskeleton. The protein resides in the microtubule organizing center. The protein localises to the centrosome. The catalysed reaction is RNA(n) + ATP = RNA(n)-3'-adenine ribonucleotide + diphosphate. In terms of biological role, catalyzes the transfer of one adenosine molecule from an ATP to an mRNA poly(A) tail bearing a 3'-OH terminal group and enhances mRNA stability and gene expression. The protein is Terminal nucleotidyltransferase 5C of Gallus gallus (Chicken).